We begin with the raw amino-acid sequence, 412 residues long: Probable serine/threonine-protein kinase PBL10 (412 aa).

Gly-2 carries the N-myristoyl glycine lipid modification. A lipid anchor (S-palmitoyl cysteine) is attached at Cys-4. A disordered region spans residues 15–45; that stretch reads GASPKYMSSEANDSLGSKSSSVSIRTNPRTE. The segment covering 23 to 43 has biased composition (polar residues); the sequence is SEANDSLGSKSSSVSIRTNPR. Thr-58 carries the phosphothreonine modification. In terms of domain architecture, Protein kinase spans 69-356; sequence FRPDSVLGEG…VVSHLEHIQT (288 aa). Residues 75-83 and Lys-107 each bind ATP; that span reads LGEGGFGSV. Tyr-152 carries the post-translational modification Phosphotyrosine. Asp-204 (proton acceptor) is an active-site residue. 2 positions are modified to phosphoserine: Ser-208 and Ser-238. Phosphothreonine occurs at positions 239 and 244. A Phosphotyrosine modification is found at Tyr-252.

This sequence belongs to the protein kinase superfamily. Ser/Thr protein kinase family. Interacts with the Xanthomonas campestris effector XopAC/AvrAC. As to expression, expressed in stomatal guard cells of leaves.

It localises to the cell membrane. It catalyses the reaction L-seryl-[protein] + ATP = O-phospho-L-seryl-[protein] + ADP + H(+). It carries out the reaction L-threonyl-[protein] + ATP = O-phospho-L-threonyl-[protein] + ADP + H(+). In terms of biological role, possible bi-functional kinase. In vitro, it exhibits serine/threonine activity. In vivo, can phosphorylate tyrosine residues of limited substrates. May be involved in plant defense signaling. Required for full light-induced stomatal opening. The polypeptide is Probable serine/threonine-protein kinase PBL10 (Arabidopsis thaliana (Mouse-ear cress)).